The following is a 270-amino-acid chain: 3-methyl-2-oxobutanoate hydroxymethyltransferase (270 aa).

Mg(2+)-binding residues include Asp-43 and Asp-82. 3-methyl-2-oxobutanoate contacts are provided by residues 43–44, Asp-82, and Lys-112; that span reads DS. Glu-114 is a binding site for Mg(2+). Glu-179 acts as the Proton acceptor in catalysis.

The protein belongs to the PanB family. As to quaternary structure, homodecamer; pentamer of dimers. The cofactor is Mg(2+).

The protein localises to the cytoplasm. It carries out the reaction 3-methyl-2-oxobutanoate + (6R)-5,10-methylene-5,6,7,8-tetrahydrofolate + H2O = 2-dehydropantoate + (6S)-5,6,7,8-tetrahydrofolate. Its pathway is cofactor biosynthesis; (R)-pantothenate biosynthesis; (R)-pantoate from 3-methyl-2-oxobutanoate: step 1/2. Its function is as follows. Catalyzes the reversible reaction in which hydroxymethyl group from 5,10-methylenetetrahydrofolate is transferred onto alpha-ketoisovalerate to form ketopantoate. This chain is 3-methyl-2-oxobutanoate hydroxymethyltransferase, found in Staphylococcus carnosus (strain TM300).